A 94-amino-acid polypeptide reads, in one-letter code: Pyrimidine/purine nucleoside phosphorylase (94 aa).

It belongs to the nucleoside phosphorylase PpnP family.

It carries out the reaction a purine D-ribonucleoside + phosphate = a purine nucleobase + alpha-D-ribose 1-phosphate. The enzyme catalyses adenosine + phosphate = alpha-D-ribose 1-phosphate + adenine. The catalysed reaction is cytidine + phosphate = cytosine + alpha-D-ribose 1-phosphate. It catalyses the reaction guanosine + phosphate = alpha-D-ribose 1-phosphate + guanine. It carries out the reaction inosine + phosphate = alpha-D-ribose 1-phosphate + hypoxanthine. The enzyme catalyses thymidine + phosphate = 2-deoxy-alpha-D-ribose 1-phosphate + thymine. The catalysed reaction is uridine + phosphate = alpha-D-ribose 1-phosphate + uracil. It catalyses the reaction xanthosine + phosphate = alpha-D-ribose 1-phosphate + xanthine. Functionally, catalyzes the phosphorolysis of diverse nucleosides, yielding D-ribose 1-phosphate and the respective free bases. Can use uridine, adenosine, guanosine, cytidine, thymidine, inosine and xanthosine as substrates. Also catalyzes the reverse reactions. The chain is Pyrimidine/purine nucleoside phosphorylase from Vibrio campbellii (strain ATCC BAA-1116).